Consider the following 507-residue polypeptide: Pre-glycoprotein polyprotein GP complex (507 aa).

Gly2 is lipidated: N-myristoyl glycine; by host. Residues 2-17 (GQVVTFLQSLPEVINE) lie on the Extracellular side of the membrane. The chain crosses the membrane as a helical span at residues 18–33 (AINIALIAISIICILK). The Cytoplasmic portion of the chain corresponds to 34–58 (GLVNFWKCGVVQLAIFLCLAGRKCD). Residue Cys57 coordinates Zn(2+). Residues 59-445 (GLMIDRRHEL…QGKTPIALTD (387 aa)) lie on the Extracellular side of the membrane. Disulfide bonds link Cys86-Cys247, Cys292-Cys305, Cys314-Cys323, and Cys377-Cys398. N-linked (GlcNAc...) asparagine; by host glycosylation is found at Asn89, Asn111, Asn179, and Asn240. Residues Asn378, Asn386, Asn403, and Asn408 are each glycosylated (N-linked (GlcNAc...) asparagine; by host). The helical transmembrane segment at 446 to 466 (ICFWSLVFFTSTVFLQLVGIP) threads the bilayer. Residues 467-507 (THRHLVGEGCPKPHRITSNSLCACGYYKIPKRPTRWVRKGK) are Cytoplasmic-facing. The Zn(2+) site is built by His468, His470, Cys476, His480, Cys488, and Cys490.

The protein belongs to the arenaviridae GPC protein family. As to quaternary structure, interacts with glycoprotein G2. Part of the GP complex (GP-C) together with glycoprotein G1 and glycoprotein G2. The GP-complex interacts with protein Z, which interacts with ribonucleocapsid; these interactions may induce virion budding. In terms of assembly, homotrimer; disulfide-linked. In pre-fusion state, G1 homotrimers bind G2 homotrimers via ionic interactions. Part of the GP complex (GP-C) together with glycoprotein G2 and the stable signal peptide. The GP-complex interacts with protein Z, which interacts with ribonucleocapsid; these interactions may induce virion budding. Homotrimer. Interacts with the stable signal peptide. In pre-fusion state, G2 homotrimers bind G1 homotrimers via ionic interactions. Part of the GP complex (GP-C) together with glycoprotein G1 and the stable signal peptide. Acidification in the endosome triggers rearrangements, which ultimately leads to a 6 helix bundle formed by the two heptad repeat domains (HR1 and HR2) in post-fusion state. The GP-complex interacts with protein Z, which interacts with ribonucleocapsid; these interactions may induce virion budding. In terms of processing, specific enzymatic cleavages in vivo yield mature proteins. GP-C polyprotein is cleaved in the endoplasmic reticulum by the host protease MBTPS1. Only cleaved glycoprotein is incorporated into virions. Post-translationally, the SSP remains stably associated with the GP complex following cleavage by signal peptidase and plays crucial roles in the trafficking of GP through the secretory pathway. Myristoylation is necessary for GP2-mediated fusion activity.

It localises to the virion membrane. The protein localises to the host endoplasmic reticulum membrane. Its subcellular location is the host Golgi apparatus membrane. The protein resides in the host cell membrane. In terms of biological role, functions as a cleaved signal peptide that is retained as the third component of the GP complex (GP-C). Helps to stabilize the spike complex in its native conformation. The SSP is required for efficient glycoprotein expression, post-translational maturation cleavage of G1 and G2, glycoprotein transport to the cell surface plasma membrane, formation of infectious virus particles, and acid pH-dependent glycoprotein-mediated cell fusion. Functionally, forms the virion spikes together with glycoprotein G2. The glycoprotein spike trimers are connected to the underlying matrix. Interacts with the host receptor leading to virus endocytosis. Its function is as follows. Forms the virion spikes together with glycoprotein G1. The glycoprotein spike trimers are connected to the underlying matrix. Class I viral fusion protein that directs fusion of viral and host endosomal membranes, leading to delivery of the nucleocapsid into the cytoplasm. Membrane fusion is mediated by irreversible conformational changes induced by acidification. The protein is Pre-glycoprotein polyprotein GP complex of Allpahuayo mammarenavirus (isolate Rat/Peru/CLHP-2472/1997) (ALLV).